The sequence spans 208 residues: Small ribosomal subunit protein uS4 (208 aa).

The tract at residues 28–48 (YMERRPYGPGEHGRARKKQDS) is disordered. The region spanning 95–160 (MRLDALVLRA…MPPFQVAAAG (66 aa)) is the S4 RNA-binding domain.

Belongs to the universal ribosomal protein uS4 family. As to quaternary structure, part of the 30S ribosomal subunit. Contacts protein S5. The interaction surface between S4 and S5 is involved in control of translational fidelity.

One of the primary rRNA binding proteins, it binds directly to 16S rRNA where it nucleates assembly of the body of the 30S subunit. Functionally, with S5 and S12 plays an important role in translational accuracy. The sequence is that of Small ribosomal subunit protein uS4 from Arthrobacter sp. (strain FB24).